We begin with the raw amino-acid sequence, 753 residues long: 5-methyltetrahydropteroyltriglutamate--homocysteine methyltransferase (753 aa).

Residues 17–20 (RELK) and K117 each bind 5-methyltetrahydropteroyltri-L-glutamate. L-homocysteine is bound by residues 431-433 (IGS) and E484. Residues 431 to 433 (IGS) and E484 contribute to the L-methionine site. Residues 515 to 516 (RC) and W561 contribute to the 5-methyltetrahydropteroyltri-L-glutamate site. D599 lines the L-homocysteine pocket. D599 contacts L-methionine. E605 serves as a coordination point for 5-methyltetrahydropteroyltri-L-glutamate. 3 residues coordinate Zn(2+): H641, C643, and E665. The active-site Proton donor is the H694. C726 is a binding site for Zn(2+).

The protein belongs to the vitamin-B12 independent methionine synthase family. It depends on Zn(2+) as a cofactor.

It carries out the reaction 5-methyltetrahydropteroyltri-L-glutamate + L-homocysteine = tetrahydropteroyltri-L-glutamate + L-methionine. The protein operates within amino-acid biosynthesis; L-methionine biosynthesis via de novo pathway; L-methionine from L-homocysteine (MetE route): step 1/1. Its function is as follows. Catalyzes the transfer of a methyl group from 5-methyltetrahydrofolate to homocysteine resulting in methionine formation. This Shigella dysenteriae serotype 1 (strain Sd197) protein is 5-methyltetrahydropteroyltriglutamate--homocysteine methyltransferase.